Reading from the N-terminus, the 223-residue chain is RNA-free ribonuclease P (223 aa).

Belongs to the HARP family.

The catalysed reaction is Endonucleolytic cleavage of RNA, removing 5'-extranucleotides from tRNA precursor.. Functionally, RNA-free RNase P that catalyzes the removal of the 5'-leader sequence from pre-tRNA to produce the mature 5'-terminus. In Methanococcus vannielii (strain ATCC 35089 / DSM 1224 / JCM 13029 / OCM 148 / SB), this protein is RNA-free ribonuclease P.